The chain runs to 288 residues: Protoheme IX farnesyltransferase (288 aa).

Helical transmembrane passes span 8–28 (ATKP…FLLA), 35–55 (YLIF…GCVL), 80–100 (ISIL…IYLL), 107–127 (LTML…TKCM), 132–152 (IYST…GYCA), 162–182 (LLLL…IAIL), 208–228 (IVIY…SGYT), 229–249 (TSYQ…YLAL), and 266–286 (FIFS…DSIF).

This sequence belongs to the UbiA prenyltransferase family. Protoheme IX farnesyltransferase subfamily.

The protein resides in the cell membrane. The enzyme catalyses heme b + (2E,6E)-farnesyl diphosphate + H2O = Fe(II)-heme o + diphosphate. The protein operates within porphyrin-containing compound metabolism; heme O biosynthesis; heme O from protoheme: step 1/1. Converts heme B (protoheme IX) to heme O by substitution of the vinyl group on carbon 2 of heme B porphyrin ring with a hydroxyethyl farnesyl side group. This is Protoheme IX farnesyltransferase from Baumannia cicadellinicola subsp. Homalodisca coagulata.